A 167-amino-acid chain; its full sequence is Insertion element IS1 1 protein InsB (167 aa).

This sequence belongs to the transposase 27 family.

Absolutely required for transposition of IS1. This is Insertion element IS1 1 protein InsB (insB1) from Escherichia coli (strain K12).